Consider the following 410-residue polypeptide: Elongation factor Tu, chloroplastic (410 aa).

Residues 10-214 form the tr-type G domain; it reads KPHVNIGTIG…NVDEYIPTPE (205 aa). A G1 region spans residues 19–26; that stretch reads GHVDHGKT. GTP is bound at residue 19-26; that stretch reads GHVDHGKT. T26 is a binding site for Mg(2+). Residues 60 to 64 are G2; sequence GITIN. The segment at 81-84 is G3; that stretch reads DCPG. GTP is bound by residues 81-85 and 136-139; these read DCPGH and NKED. The segment at 136-139 is G4; it reads NKED. A G5 region spans residues 174–176; that stretch reads SAL.

It belongs to the TRAFAC class translation factor GTPase superfamily. Classic translation factor GTPase family. EF-Tu/EF-1A subfamily.

Its subcellular location is the plastid. The protein resides in the chloroplast stroma. It catalyses the reaction GTP + H2O = GDP + phosphate + H(+). Functionally, GTP hydrolase that promotes the GTP-dependent binding of aminoacyl-tRNA to the A-site of ribosomes during protein biosynthesis. This is Elongation factor Tu, chloroplastic (tufA) from Bigelowiella natans (Pedinomonas minutissima).